A 277-amino-acid polypeptide reads, in one-letter code: Putative thiosulfate sulfurtransferase mpst-4 (277 aa).

Rhodanese domains follow at residues 15–153 and 155–243; these read NFGN…VVQS and SKAE…QHLN. Cys-204 serves as the catalytic Cysteine persulfide intermediate.

It catalyses the reaction thiosulfate + hydrogen cyanide = thiocyanate + sulfite + 2 H(+). The sequence is that of Putative thiosulfate sulfurtransferase mpst-4 from Caenorhabditis elegans.